The chain runs to 317 residues: MHFLEFEKPIADLEGKIEELRTLTDGGDINIADEVKKLQEKVDKLLRSTYAKLTPAQKVQVARHPERPHCLDYIQRLITDFTPLAGDRLFAEDRAIVGGLGRFRGRSVVVIGQERGHDTESRVRHNFGMAKPEGYRKAQRLLQLADRFRLPVVTLVDTAGAFPGVSAEERGQAEAIARSIETCLRLKVPLVSAVIGEGGSGGAIAIATADRVLMLEHAIYSVISPEGCASILWRSAANASDAAQALRLTAQDLKELGVIDRVVMEPVGGAHRRREEMIATLGNAIEDALDDLREQDGATLRLNRRQKFLDIGQKGLG.

The 255-residue stretch at 37–291 (KLQEKVDKLL…GNAIEDALDD (255 aa)) folds into the CoA carboxyltransferase C-terminal domain.

This sequence belongs to the AccA family. In terms of assembly, acetyl-CoA carboxylase is a heterohexamer composed of biotin carboxyl carrier protein (AccB), biotin carboxylase (AccC) and two subunits each of ACCase subunit alpha (AccA) and ACCase subunit beta (AccD).

It localises to the cytoplasm. It catalyses the reaction N(6)-carboxybiotinyl-L-lysyl-[protein] + acetyl-CoA = N(6)-biotinyl-L-lysyl-[protein] + malonyl-CoA. It functions in the pathway lipid metabolism; malonyl-CoA biosynthesis; malonyl-CoA from acetyl-CoA: step 1/1. Component of the acetyl coenzyme A carboxylase (ACC) complex. First, biotin carboxylase catalyzes the carboxylation of biotin on its carrier protein (BCCP) and then the CO(2) group is transferred by the carboxyltransferase to acetyl-CoA to form malonyl-CoA. The protein is Acetyl-coenzyme A carboxylase carboxyl transferase subunit alpha of Rhodospirillum centenum (strain ATCC 51521 / SW).